The sequence spans 339 residues: uncharacterized protein (339 aa).

A compositionally biased stretch (polar residues) spans 1-12; it reads MDIDLNNQTDNN. Positions 1–30 are disordered; it reads MDIDLNNQTDNNELIVEDTENPKNPNSTNI.

This is an uncharacterized protein from Acanthamoeba polyphaga (Amoeba).